Reading from the N-terminus, the 209-residue chain is Uracil phosphoribosyltransferase (209 aa).

5-phospho-alpha-D-ribose 1-diphosphate contacts are provided by residues Arg-79, Arg-104, and 131 to 139 (DPMLATGNS). Residues Ile-194 and 199-201 (GDA) each bind uracil. Asp-200 lines the 5-phospho-alpha-D-ribose 1-diphosphate pocket.

The protein belongs to the UPRTase family. Mg(2+) serves as cofactor.

The enzyme catalyses UMP + diphosphate = 5-phospho-alpha-D-ribose 1-diphosphate + uracil. It functions in the pathway pyrimidine metabolism; UMP biosynthesis via salvage pathway; UMP from uracil: step 1/1. Allosterically activated by GTP. Its function is as follows. Catalyzes the conversion of uracil and 5-phospho-alpha-D-ribose 1-diphosphate (PRPP) to UMP and diphosphate. This Acidovorax sp. (strain JS42) protein is Uracil phosphoribosyltransferase.